The chain runs to 275 residues: DNA-directed RNA polymerase subunit Rpo3 (275 aa).

This sequence belongs to the archaeal Rpo3/eukaryotic RPB3 RNA polymerase subunit family. As to quaternary structure, part of the RNA polymerase complex.

It localises to the cytoplasm. It catalyses the reaction RNA(n) + a ribonucleoside 5'-triphosphate = RNA(n+1) + diphosphate. In terms of biological role, DNA-dependent RNA polymerase (RNAP) catalyzes the transcription of DNA into RNA using the four ribonucleoside triphosphates as substrates. The sequence is that of DNA-directed RNA polymerase subunit Rpo3 from Methanopyrus kandleri (strain AV19 / DSM 6324 / JCM 9639 / NBRC 100938).